A 134-amino-acid polypeptide reads, in one-letter code: Interleukin-5 (134 aa).

Positions 1–19 are cleaved as a signal peptide; it reads MRMLLHLSLLALGAAYVYA. Thr-22 is a glycosylation site (O-linked (GalNAc...) threonine). 2 N-linked (GlcNAc...) asparagine glycosylation sites follow: Asn-47 and Asn-90.

It belongs to the IL-5 family. In terms of assembly, homodimer; disulfide-linked. Interacts with IL5RA. Interacts with CSF2RB.

It is found in the secreted. Its function is as follows. Homodimeric cytokine expressed predominantly by T-lymphocytes and NK cells that plays an important role in the survival, differentiation, and chemotaxis of eosinophils. Also acts on activated and resting B-cells to induce immunoglobulin production, growth, and differentiation. Mechanistically, exerts its biological effects through a receptor composed of IL5RA subunit and the cytokine receptor common subunit beta/CSF2RB. Binding to the receptor leads to activation of various kinases including LYN, SYK and JAK2 and thereby propagates signals through the RAS-MAPK and JAK-STAT5 pathways respectively. This chain is Interleukin-5 (IL5), found in Macaca mulatta (Rhesus macaque).